A 627-amino-acid chain; its full sequence is MACPF domain-containing protein At1g14780 (627 aa).

Residues 1 to 339 (MSRDGGDVIE…PPLMDLQYFL (339 aa)) enclose the MACPF domain.

It belongs to the complement C6/C7/C8/C9 (TC 1.C.39) family.

Functionally, negatively controls the salicylic acid (SA)-mediated pathway of programmed cell death in plant immunity. This chain is MACPF domain-containing protein At1g14780, found in Arabidopsis thaliana (Mouse-ear cress).